The following is a 424-amino-acid chain: Histidine--tRNA ligase (424 aa).

The protein belongs to the class-II aminoacyl-tRNA synthetase family. In terms of assembly, homodimer.

Its subcellular location is the cytoplasm. The enzyme catalyses tRNA(His) + L-histidine + ATP = L-histidyl-tRNA(His) + AMP + diphosphate + H(+). The chain is Histidine--tRNA ligase from Escherichia coli O17:K52:H18 (strain UMN026 / ExPEC).